The chain runs to 428 residues: Gamma-glutamyl phosphate reductase (428 aa).

Belongs to the gamma-glutamyl phosphate reductase family.

It is found in the cytoplasm. It catalyses the reaction L-glutamate 5-semialdehyde + phosphate + NADP(+) = L-glutamyl 5-phosphate + NADPH + H(+). It functions in the pathway amino-acid biosynthesis; L-proline biosynthesis; L-glutamate 5-semialdehyde from L-glutamate: step 2/2. Catalyzes the NADPH-dependent reduction of L-glutamate 5-phosphate into L-glutamate 5-semialdehyde and phosphate. The product spontaneously undergoes cyclization to form 1-pyrroline-5-carboxylate. The polypeptide is Gamma-glutamyl phosphate reductase (Chromohalobacter salexigens (strain ATCC BAA-138 / DSM 3043 / CIP 106854 / NCIMB 13768 / 1H11)).